The sequence spans 116 residues: Large ribosomal subunit protein bL17 (116 aa).

The protein belongs to the bacterial ribosomal protein bL17 family. As to quaternary structure, part of the 50S ribosomal subunit. Contacts protein L32.

The sequence is that of Large ribosomal subunit protein bL17 from Picosynechococcus sp. (strain ATCC 27264 / PCC 7002 / PR-6) (Agmenellum quadruplicatum).